Here is a 481-residue protein sequence, read N- to C-terminus: Zinc metalloproteinase/disintegrin (481 aa).

Positions 1–20 (MIQVLLVTICLAVFPYQGSS) are cleaved as a signal peptide. Residues 21–190 (IILESGNVDD…KASQLYLTPE (170 aa)) constitute a propeptide that is removed on maturation. The region spanning 197–392 (RYIKLAIVVD…DNPQCILNAP (196 aa)) is the Peptidase M12B domain. Intrachain disulfides connect C308-C387, C349-C371, and C351-C354. H333 is a binding site for Zn(2+). The active site involves E334. 2 residues coordinate Zn(2+): H337 and H343. The propeptide occupies 393–408 (LRTDTVSTPVSGNEFL). The Disintegrin domain maps to 400–481 (TPVSGNEFLE…GDCPRNPFHA (82 aa)). 6 disulfides stabilise this stretch: C414-C429, C416-C424, C423-C446, C437-C443, C442-C467, and C455-C474. A Cell attachment site motif is present at residues 459–461 (RGD).

It belongs to the venom metalloproteinase (M12B) family. P-II subfamily. P-IIa sub-subfamily. In terms of assembly, monomer. Zn(2+) serves as cofactor. Expressed by the venom gland.

The protein resides in the secreted. Its function is as follows. Impairs hemostasis in the envenomed animal. Functionally, disintegrin elegantin-2a-f: inhibits platelet aggregation induced by ADP, thrombin, platelet-activating factor and collagen. Acts by inhibiting fibrinogen interaction with platelet receptors GPIIb/GPIIIa (ITGA2B/ITGB3). This Protobothrops elegans (Elegant pitviper) protein is Zinc metalloproteinase/disintegrin.